The following is a 473-amino-acid chain: Aspartyl aminopeptidase 1 (473 aa).

His-93 serves as a coordination point for Zn(2+). His-168 is a substrate binding site. 4 residues coordinate Zn(2+): Asp-262, Glu-298, Glu-299, and Asp-343. Glu-298 is a substrate binding site. Substrate is bound by residues Asp-343, His-346, Lys-371, and Tyr-378. Position 437 (His-437) interacts with Zn(2+).

This sequence belongs to the peptidase M18 family. In terms of assembly, tetrahedron-shaped homododecamer built from six homodimers. Interacts with autophagy receptor Nbr1. The cofactor is Zn(2+).

The protein resides in the cytoplasm. It localises to the vacuole lumen. The catalysed reaction is Release of an N-terminal aspartate or glutamate from a peptide, with a preference for aspartate.. Aspartyl aminopeptidase that is able to remove aspartyl residue at N-terminus of angiotensin I. Also acts as a chaperone and efficiently suppressed the thermal aggregation of citrate synthase. The protein is Aspartyl aminopeptidase 1 (ape4) of Schizosaccharomyces pombe (strain 972 / ATCC 24843) (Fission yeast).